The sequence spans 256 residues: 5-keto-4-deoxy-D-glucarate aldolase (256 aa).

Histidine 50 (proton acceptor) is an active-site residue. Residue glutamine 151 participates in substrate binding. A Mg(2+)-binding site is contributed by glutamate 153. Positions 178 and 179 each coordinate substrate. Aspartate 179 lines the Mg(2+) pocket.

This sequence belongs to the HpcH/HpaI aldolase family. KDGluc aldolase subfamily. Homohexamer; trimer of dimers. Mg(2+) is required as a cofactor.

It catalyses the reaction 5-dehydro-4-deoxy-D-glucarate = 2-hydroxy-3-oxopropanoate + pyruvate. The enzyme catalyses 2-dehydro-3-deoxy-D-glucarate = 2-hydroxy-3-oxopropanoate + pyruvate. Its pathway is carbohydrate acid metabolism; galactarate degradation; D-glycerate from galactarate: step 2/3. In terms of biological role, catalyzes the reversible retro-aldol cleavage of both 5-keto-4-deoxy-D-glucarate and 2-keto-3-deoxy-D-glucarate to pyruvate and tartronic semialdehyde. The polypeptide is 5-keto-4-deoxy-D-glucarate aldolase (Enterobacter sp. (strain 638)).